A 498-amino-acid chain; its full sequence is Cytochrome P450 monooxygenase ltmP (498 aa).

A signal peptide spans 1–21 (MLMLHAVPVGICLLLWYVVYG). An N-linked (GlcNAc...) asparagine glycan is attached at N420. Heme is bound at residue C435.

Belongs to the cytochrome P450 family. The cofactor is heme.

It participates in secondary metabolite biosynthesis. In terms of biological role, cytochrome P450 monooxygenase; part of the gene clusters that mediates the biosynthesis of lolitrems, indole-diterpene mycotoxins that are potent tremorgens in mammals, and are synthesized by clavicipitaceous fungal endophytes in association with their grass hosts. The geranylgeranyl diphosphate (GGPP) synthase ltmG is proposed to catalyze the first step in lolitrem biosynthesis. LtmG catalyzes a series of iterative condensations of isopentenyl diphosphate (IPP) with dimethylallyl diphosphate (DMAPP), geranyl diphosphate (GPP), and farnesyl diphosphate (FPP), to form GGPP. GGPP then condenses with indole-3-glycerol phosphate to form 3-geranylgeranylindole, an acyclic intermediate, to be incorporated into paxilline. Either ltmG or ltmC could be responsible for this step, as both are putative prenyl transferases. The FAD-dependent monooxygenase ltmM then catalyzes the epoxidation of the two terminal alkenes of the geranylgeranyl moiety, which is subsequently cyclized by ltmB, to paspaline. The cytochrome P450 monooxygenases ltmQ and ltmP can sequentially oxidize paspaline to terpendole E and terpendole F. Alternatively, ltmP converts paspaline to an intermediate which is oxidized by ltmQ to terpendole F. LtmF, ltmK, ltmE and ltmJ appear to be unique to the epichloe endophytes. The prenyltransferase ltmF is involved in the 27-hydroxyl-O-prenylation. The cytochrome P450 monooxygenase ltmK is required for the oxidative acetal ring formation. The multi-functional prenyltransferase ltmE is required for C20- and C21-prenylations of the indole ring of paspalanes and acts together with the cytochrome P450 monooxygenase ltmJ to yield lolitremanes by multiple oxidations and ring closures. The stereoisomer pairs of lolitriol and lolitrem N or lolitrem B and lolitrem F may be attributed to variations in the way in which ring closure can occur under the action of ltmJ. While the major product of this pathway is lolitrem B, the prenyl transferases and cytochrome P450 monooxygenases identified in this pathway have a remarkable versatility in their regio- and stereo-specificities to generate a diverse range of metabolites that are products of a metabolic grid rather than a linear pathway. In Epichloe festucae var. lolii (Neotyphodium lolii), this protein is Cytochrome P450 monooxygenase ltmP.